The sequence spans 312 residues: Beta-ketoacyl-[acyl-carrier-protein] synthase III (312 aa).

Active-site residues include C112 and H237. An ACP-binding region spans residues 238–242; the sequence is QANIR. N267 is an active-site residue.

Belongs to the thiolase-like superfamily. FabH family. Homodimer.

The protein localises to the cytoplasm. The catalysed reaction is malonyl-[ACP] + acetyl-CoA + H(+) = 3-oxobutanoyl-[ACP] + CO2 + CoA. Its pathway is lipid metabolism; fatty acid biosynthesis. Catalyzes the condensation reaction of fatty acid synthesis by the addition to an acyl acceptor of two carbons from malonyl-ACP. Catalyzes the first condensation reaction which initiates fatty acid synthesis and may therefore play a role in governing the total rate of fatty acid production. Possesses both acetoacetyl-ACP synthase and acetyl transacylase activities. Its substrate specificity determines the biosynthesis of branched-chain and/or straight-chain of fatty acids. This is Beta-ketoacyl-[acyl-carrier-protein] synthase III from Bacillus pumilus (strain SAFR-032).